A 231-amino-acid polypeptide reads, in one-letter code: 3-oxoadipate CoA-transferase subunit A (231 aa).

25-31 (GGFGTAG) contributes to the CoA binding site.

Belongs to the 3-oxoacid CoA-transferase subunit A family. In terms of assembly, heterodimer.

The catalysed reaction is 3-oxoadipate + succinyl-CoA = 3-oxoadipyl-CoA + succinate. Its pathway is aromatic compound metabolism; beta-ketoadipate pathway; acetyl-CoA and succinyl-CoA from 3-oxoadipate: step 1/2. The chain is 3-oxoadipate CoA-transferase subunit A (pcaI) from Pseudomonas putida (Arthrobacter siderocapsulatus).